Here is a 146-residue protein sequence, read N- to C-terminus: Coactosin (146 aa).

The 132-residue stretch at 1–132 folds into the ADF-H domain; it reads MADVSSTELK…NEEELMTKVR (132 aa).

Belongs to the actin-binding proteins ADF family. Coactosin subfamily. Post-translationally, the N-terminus is blocked.

The protein localises to the cytoplasm. The protein resides in the cytoskeleton. Its function is as follows. Binds to F-actin in a calcium independent manner. Binds to the filaments along their length. The chain is Coactosin (coaA) from Dictyostelium discoideum (Social amoeba).